Consider the following 261-residue polypeptide: HLA class II histocompatibility antigen, DM alpha chain (261 aa).

Residues 1 to 26 (MGHEQNQGAALLQMLPLLWLLPHSWA) form the signal peptide. The alpha-1 stretch occupies residues 27–124 (VPEAPTPMWP…KLDGKIPVSR (98 aa)). Over 27-233 (VPEAPTPMWP…PSDLLENVLC (207 aa)) the chain is Lumenal. N-linked (GlcNAc...) asparagine glycosylation is present at N41. 2 disulfide bridges follow: C50–C105 and C147–C202. The 95-residue stretch at 121–215 (PVSRGFPIAE…HEIDRYTAIA (95 aa)) folds into the Ig-like C1-type domain. Residues 125-217 (GFPIAEVFTL…IDRYTAIAYW (93 aa)) are alpha-2. The segment at 218-233 (VPRNALPSDLLENVLC) is connecting peptide. Residues 234 to 254 (GVAFGLGVLGIIVGIVLIIYF) form a helical membrane-spanning segment. Topologically, residues 255 to 261 (RKPCSGD) are cytoplasmic.

It belongs to the MHC class II family. Heterodimer of an alpha chain (DMA) and a beta chain (DMB). Interacts with MHCII; this interaction mediates rapid selection of high-affinity peptides in a pH-dependent manner, with an optimum at pH 5.5.

It is found in the late endosome membrane. It localises to the lysosome membrane. Its function is as follows. Plays a critical role in catalyzing the release of class II-associated invariant chain peptide (CLIP) from newly synthesized MHC class II molecules and freeing the peptide binding site for acquisition of antigenic peptides. In B-cells, the interaction between HLA-DM and MHC class II molecules is regulated by HLA-DO. The polypeptide is HLA class II histocompatibility antigen, DM alpha chain (HLA-DMA) (Homo sapiens (Human)).